The following is a 607-amino-acid chain: Siderophore iron transporter mirC (607 aa).

A run of 12 helical transmembrane segments spans residues 67 to 89 (LVIA…QTIM), 129 to 148 (VFGR…LGYI), 186 to 208 (SLLN…VWIG), 223 to 245 (WGYG…SLLL), 279 to 301 (IFGL…LAAN), 311 to 328 (IVAM…LPFW), 349 to 368 (TALA…YFSV), 388 to 410 (GRVT…ILIK), 417 to 436 (VYVT…MLLY), 446 to 468 (VLGT…QLGV), 481 to 503 (TAMF…GAVW), and 557 to 574 (LLVL…LSLL). The span at 584-593 (SESSDHDDAS) shows a compositional bias: basic and acidic residues. The interval 584–607 (SESSDHDDASPRNGLGPGERAKRT) is disordered.

It belongs to the major facilitator superfamily.

Its subcellular location is the membrane. This Emericella nidulans (strain FGSC A4 / ATCC 38163 / CBS 112.46 / NRRL 194 / M139) (Aspergillus nidulans) protein is Siderophore iron transporter mirC (mirC).